Here is a 183-residue protein sequence, read N- to C-terminus: Protein Syd (183 aa).

This sequence belongs to the Syd family.

It is found in the cell inner membrane. In terms of biological role, interacts with the SecY protein in vivo. May bind preferentially to an uncomplexed state of SecY, thus functioning either as a chelating agent for excess SecY in the cell or as a regulatory factor that negatively controls the translocase function. This chain is Protein Syd, found in Yersinia enterocolitica serotype O:8 / biotype 1B (strain NCTC 13174 / 8081).